A 469-amino-acid polypeptide reads, in one-letter code: Phosphatidylinositol 4-kinase type 2-beta (469 aa).

Positions 1 to 84 (MAEACEPTRP…LDRTRTTSSE (84 aa)) are disordered. Phosphoserine is present on serine 37. The region spanning 108–439 (GVFPERISQG…AQMPCVIVEC (332 aa)) is the PI3K/PI4K catalytic domain. Residues 114–120 (ISQGSSG) form a G-loop region. ATP-binding residues include serine 121 and lysine 136. Positions 141 to 143 (EPY) are important for substrate binding. Residues 149–162 (KWTKYVHKVCCPCC) are important for interaction with membranes. ATP is bound by residues 245–248 (QLFV) and 259–260 (RR). Positions 252 to 260 (KEAEYWLRR) are important for interaction with membranes. Positions 289-297 (RNTDRGNDN) are catalytic loop. Residues 330–350 (AIDNGLAFPFKHPDEWRAYPF) form an activation loop region. Aspartate 332 lines the ATP pocket. Residues 345–354 (WRAYPFHWAW) form an important for interaction with membranes region.

Belongs to the PI3/PI4-kinase family. Type II PI4K subfamily.

It is found in the cytoplasm. It localises to the cytosol. The protein localises to the golgi apparatus membrane. The protein resides in the endoplasmic reticulum membrane. Its subcellular location is the cell membrane. It is found in the early endosome membrane. It carries out the reaction a 1,2-diacyl-sn-glycero-3-phospho-(1D-myo-inositol) + ATP = a 1,2-diacyl-sn-glycero-3-phospho-(1D-myo-inositol 4-phosphate) + ADP + H(+). Its function is as follows. Together with PI4K2A and the type III PI4Ks (PIK4CA and PIK4CB) it contributes to the overall PI4-kinase activity of the cell. This contribution may be especially significant in plasma membrane, endosomal and Golgi compartments. The phosphorylation of phosphatidylinositol (PI) to PI4P is the first committed step in the generation of phosphatidylinositol 4,5-bisphosphate (PIP2), a precursor of the second messenger inositol 1,4,5-trisphosphate (InsP3). Contributes to the production of InsP3 in stimulated cells and is likely to be involved in the regulation of vesicular trafficking. This chain is Phosphatidylinositol 4-kinase type 2-beta (Pi4k2b), found in Mus musculus (Mouse).